A 124-amino-acid polypeptide reads, in one-letter code: S-adenosylmethionine decarboxylase proenzyme (124 aa).

Residue Ser-63 is the Schiff-base intermediate with substrate; via pyruvic acid of the active site. Ser-63 is subject to Pyruvic acid (Ser); by autocatalysis. His-68 acts as the Proton acceptor; for processing activity in catalysis. Cys-83 acts as the Proton donor; for catalytic activity in catalysis.

This sequence belongs to the prokaryotic AdoMetDC family. Type 1 subfamily. Heterotetramer of two alpha and two beta chains arranged as a dimer of alpha/beta heterodimers. Requires pyruvate as cofactor. In terms of processing, is synthesized initially as an inactive proenzyme. Formation of the active enzyme involves a self-maturation process in which the active site pyruvoyl group is generated from an internal serine residue via an autocatalytic post-translational modification. Two non-identical subunits are generated from the proenzyme in this reaction, and the pyruvate is formed at the N-terminus of the alpha chain, which is derived from the carboxyl end of the proenzyme. The post-translation cleavage follows an unusual pathway, termed non-hydrolytic serinolysis, in which the side chain hydroxyl group of the serine supplies its oxygen atom to form the C-terminus of the beta chain, while the remainder of the serine residue undergoes an oxidative deamination to produce ammonia and the pyruvoyl group blocking the N-terminus of the alpha chain.

The enzyme catalyses S-adenosyl-L-methionine + H(+) = S-adenosyl 3-(methylsulfanyl)propylamine + CO2. It participates in amine and polyamine biosynthesis; S-adenosylmethioninamine biosynthesis; S-adenosylmethioninamine from S-adenosyl-L-methionine: step 1/1. Functionally, catalyzes the decarboxylation of S-adenosylmethionine to S-adenosylmethioninamine (dcAdoMet), the propylamine donor required for the synthesis of the polyamines spermine and spermidine from the diamine putrescine. The protein is S-adenosylmethionine decarboxylase proenzyme of Caldicellulosiruptor bescii (strain ATCC BAA-1888 / DSM 6725 / KCTC 15123 / Z-1320) (Anaerocellum thermophilum).